Reading from the N-terminus, the 581-residue chain is Terpene synthase 2, chloroplastic (581 aa).

The transit peptide at 1-34 (MYSLPGATMSAAPASIISSSSFVEPLLLAAASPA) directs the protein to the chloroplast. Substrate contacts are provided by Arg-299, Asp-336, Asp-340, and Arg-480. Residues Asp-336 and Asp-340 each coordinate Mg(2+). Positions 336-340 (DDIFD) match the DDXXD motif motif. 3 residues coordinate Mg(2+): Asp-483, Ser-487, and Glu-491.

It belongs to the terpene synthase family. In terms of assembly, monomer. Mg(2+) serves as cofactor.

It localises to the plastid. Its subcellular location is the chloroplast. The catalysed reaction is (2E,6E)-farnesyl diphosphate + H2O = (3S,6E)-nerolidol + diphosphate. It carries out the reaction (2E,6E,10E)-geranylgeranyl diphosphate + H2O = (6E,10E)-geranyllinalool + diphosphate. The enzyme catalyses (2E)-geranyl diphosphate + H2O = (S)-linalool + diphosphate. The protein operates within secondary metabolite biosynthesis; terpenoid biosynthesis. Functionally, involved in sesquiterpene (C15), diterpene (C20) and monoterpene (C10) biosynthesis. Has sesquiterpene synthase activity, converting farnesyl diphosphate to nerolidol, the precursor of the volatile C11-homoterpene (E)-3,8-dimethyl-1,4,7-nonatriene (DMNT). Has diterpene synthase activity, converting geranylgeranyl diphosphate to (E,E)-geranyllinalool, the precursor of the volatile C16-homoterpene (E,E)-4,8,12-trimethyltrideca 1,3,7,11-tetraene (TMTT). Has monoterpene synthase activity, converting geranyl diphosphate into linalool. Forms only the S-isomers of the three tertiary terpene alcohols. The protein is Terpene synthase 2, chloroplastic of Zea mays (Maize).